Consider the following 635-residue polypeptide: Early transcription factor 70 kDa subunit (635 aa).

The Helicase ATP-binding domain maps to 32–185 (RSIIDENKSV…SNIISLMSDE (154 aa)). 45–52 (HIMGSGKT) is an ATP binding site. Positions 135-138 (DEAH) match the DEXH box motif. In terms of domain architecture, Helicase C-terminal spans 326-505 (KFKYFIGKIT…TLPFDIKKLL (180 aa)).

Belongs to the helicase family. VETF subfamily. Heterodimer of a 70 kDa and a 82 kDa subunit.

Its subcellular location is the virion. In terms of biological role, acts with RNA polymerase to initiate transcription from early gene promoters. A DNA-dependent ATPase activity is associated with VETF. This is Early transcription factor 70 kDa subunit (VETFS) from Erythrocebus patas (Red guenon).